Here is a 410-residue protein sequence, read N- to C-terminus: Arginine deiminase (410 aa).

The active-site Amidino-cysteine intermediate is the C400.

It belongs to the arginine deiminase family.

It is found in the cytoplasm. It carries out the reaction L-arginine + H2O = L-citrulline + NH4(+). It functions in the pathway amino-acid degradation; L-arginine degradation via ADI pathway; carbamoyl phosphate from L-arginine: step 1/2. This is Arginine deiminase from Bacillus thuringiensis subsp. konkukian (strain 97-27).